The primary structure comprises 230 residues: Ribosome biogenesis protein SLX9 homolog (230 aa).

Over residues 1–11 (MGKVRGLRARV) the composition is skewed to basic residues. 2 disordered regions span residues 1 to 42 (MGKV…SAAG) and 155 to 187 (LGLE…AQRQ). A compositionally biased stretch (pro residues) spans 25–38 (GPAPPAPEATPPPA). Threonine 34 is modified (phosphothreonine). A compositionally biased stretch (basic and acidic residues) spans 166 to 177 (RSRESNKPRPSE). At serine 203 the chain carries Phosphoserine.

It belongs to the SLX9 family. As to expression, not detected in any tested tissue.

The protein resides in the nucleus. Its subcellular location is the nucleolus. Its function is as follows. May be involved in ribosome biogenesis. This is Ribosome biogenesis protein SLX9 homolog from Homo sapiens (Human).